The primary structure comprises 504 residues: Maturase K (504 aa).

Belongs to the intron maturase 2 family. MatK subfamily.

It localises to the plastid. The protein localises to the chloroplast. Functionally, usually encoded in the trnK tRNA gene intron. Probably assists in splicing its own and other chloroplast group II introns. The chain is Maturase K from Hamamelis japonica (Japanese witch hazel).